A 375-amino-acid chain; its full sequence is Trichodiene synthase (375 aa).

Belongs to the trichodiene synthase family.

It catalyses the reaction (2E,6E)-farnesyl diphosphate = trichodiene + diphosphate. It functions in the pathway sesquiterpene biosynthesis; trichothecene biosynthesis. In terms of biological role, TS is a member of the terpene cyclase group of enzymes. It catalyzes the isomerization and cyclization of farnesyl pyro-phosphate to form trichodiene, the first cyclic intermediate in the biosynthetic pathway for trichothecenes. It serves to branch trichothecene biosynthesis from the isoprenoid pathway. The polypeptide is Trichodiene synthase (TRI5) (Fusarium pseudograminearum (Wheat and barley crown-rot fungus)).